An 801-amino-acid polypeptide reads, in one-letter code: MSLLHIAVILPLIFALIIPILYRFFKRIHLGWFVLSVPIVIFIYMLTLIKTTMSGNTVMKTLNWMPHFGMNFDLYLDGLGLLFSLLISGIGSLVVLYSIGYLSKSEQLGNFYCYLLLFMGAMLGVVLSDNVIILYLFWELTSFSSFLLISFWRERQASIYGAQKSLIITVFGGLSLLGGIILLAIPTQSFSIQYMIQHASEIQNSPFFIFAMILIMIGAFTKSAQFPFYIWLPDAMEAPTPVSAYLHSATMVKAGLYLIARMTPIFAASQGWVWTVTLVGLITLFWASLNATKQQDLKGILAFSTVSQLGMIMAMLGIGAISYHYQGDDSKIYAAAFTAAIFHLINHATFKGALFMITGAVDHSTGTRDVKKLGGLLTIMPISFTITVITALSMAGVPPFNGFLSKESFLETTFTASQANLFSVDTLGYLFPIIGIVGSVFTFVYSIKFIMHIFFGQYKPEQLPKKAHEVSILMLLSPAILATLVIVFGLFPGILTNSIIEPATSSINHTVIDDVEFHMFHGLTPAFLSTLVIYILGILLIVTFSYWVKLLQRQPGKLTFNYWYNRSANVIPNYSEKMTNSYVTDYSRNNLVIIFGALILLTFVTIFSVPFNINFKDVSPIRIFEVCIVILLLSAAFLILFAKSRLFSIIMLSAVGYAVSVLFIFFKAPDLALTQFVVESISTALFLLCFYHLPNLNRYNEKRSFQLTNALIAGGVGLSVIIIGLIAYGNRHFESISKFYQEHVYDLAHGKNMVNVILVDFRGMDTLFESSVLGIAGLAVYTMIKLRKKRQTQGNEVKNHE.

Helical transmembrane passes span 4–25 (LHIA…YRFF), 30–49 (LGWF…LTLI), 79–101 (LGLL…SIGY), 108–127 (LGNF…GVVL), 131–153 (VIIL…SFWR), 166–188 (LIIT…IPTQ), 208–230 (FIFA…PFYI), 243–265 (SAYL…MTPI), 270–289 (QGWV…WASL), 302–324 (AFST…ISYH), 339–361 (AAIF…TGAV), 373–395 (LGGL…LSMA), 429–451 (YLFP…KFIM), 472–494 (ILML…FPGI), 526–548 (AFLS…SYWV), 589–611 (NNLV…SVPF), 621–641 (IRIF…LILF), 646–668 (LFSI…FFKA), 672–694 (ALTQ…YHLP), 707–729 (LTNA…IAYG), and 767–784 (LFES…YTMI).

The protein belongs to the CPA3 antiporters (TC 2.A.63) subunit A family. As to quaternary structure, may form a heterooligomeric complex that consists of seven subunits: mnhA1, mnhB1, mnhC1, mnhD1, mnhE1, mnhF1 and mnhG1.

The protein resides in the cell membrane. Its activity is regulated as follows. Na(+) extrusion is completely inhibited by the H(+) conductor carbonyl cyanide m-chlorophenylhydrazone (CCCP). Mnh complex is a Na(+)Li(+)/H(+) antiporter involved in Na(+) and/or Li(+) excretion. Na(+)/H(+) antiport consumes a transmembrane electrical potential, and is thus inferred to be electrogenic. Does not transport K(+), Ca(2+) or Mg(2+). This Staphylococcus aureus protein is Na(+)/H(+) antiporter subunit A1 (mnhA1).